Reading from the N-terminus, the 319-residue chain is Coproporphyrin III ferrochelatase 2 (319 aa).

Residues Tyr13, Arg30, 46–47, Ser54, and Tyr125 each bind Fe-coproporphyrin III; that span reads RY. Fe(2+) contacts are provided by His181 and Glu262.

The protein belongs to the ferrochelatase family.

The protein resides in the cytoplasm. The enzyme catalyses Fe-coproporphyrin III + 2 H(+) = coproporphyrin III + Fe(2+). It participates in porphyrin-containing compound metabolism; protoheme biosynthesis. Its function is as follows. Involved in coproporphyrin-dependent heme b biosynthesis. Catalyzes the insertion of ferrous iron into coproporphyrin III to form Fe-coproporphyrin III. In Bacillus cereus (strain ZK / E33L), this protein is Coproporphyrin III ferrochelatase 2.